A 98-amino-acid chain; its full sequence is NADH-ubiquinone oxidoreductase chain 4L (98 aa).

Helical transmembrane passes span 1 to 21 (MTLVYMNMALAFTISLLGLLM), 29 to 49 (SLLCLEGMMLSLFVTMAVTIL), and 61 to 81 (IILLVFAACEAALGLSLLVMV).

It belongs to the complex I subunit 4L family. As to quaternary structure, core subunit of respiratory chain NADH dehydrogenase (Complex I) which is composed of 45 different subunits.

It localises to the mitochondrion inner membrane. The enzyme catalyses a ubiquinone + NADH + 5 H(+)(in) = a ubiquinol + NAD(+) + 4 H(+)(out). In terms of biological role, core subunit of the mitochondrial membrane respiratory chain NADH dehydrogenase (Complex I) which catalyzes electron transfer from NADH through the respiratory chain, using ubiquinone as an electron acceptor. Part of the enzyme membrane arm which is embedded in the lipid bilayer and involved in proton translocation. This chain is NADH-ubiquinone oxidoreductase chain 4L (MT-ND4L), found in Rousettus aegyptiacus (Egyptian fruit bat).